The chain runs to 357 residues: Tetraacyldisaccharide 4'-kinase (357 aa).

ATP is bound at residue 54–61 (TVGGAGKT).

It belongs to the LpxK family.

The catalysed reaction is a lipid A disaccharide + ATP = a lipid IVA + ADP + H(+). It functions in the pathway glycolipid biosynthesis; lipid IV(A) biosynthesis; lipid IV(A) from (3R)-3-hydroxytetradecanoyl-[acyl-carrier-protein] and UDP-N-acetyl-alpha-D-glucosamine: step 6/6. In terms of biological role, transfers the gamma-phosphate of ATP to the 4'-position of a tetraacyldisaccharide 1-phosphate intermediate (termed DS-1-P) to form tetraacyldisaccharide 1,4'-bis-phosphate (lipid IVA). The sequence is that of Tetraacyldisaccharide 4'-kinase from Rhizobium leguminosarum bv. trifolii (strain WSM2304).